Here is a 93-residue protein sequence, read N- to C-terminus: Small ribosomal subunit protein uS19 (93 aa).

This sequence belongs to the universal ribosomal protein uS19 family.

Protein S19 forms a complex with S13 that binds strongly to the 16S ribosomal RNA. This is Small ribosomal subunit protein uS19 from Clostridium acetobutylicum (strain ATCC 824 / DSM 792 / JCM 1419 / IAM 19013 / LMG 5710 / NBRC 13948 / NRRL B-527 / VKM B-1787 / 2291 / W).